The primary structure comprises 111 residues: Large ribosomal subunit protein uL22 (111 aa).

Belongs to the universal ribosomal protein uL22 family. Part of the 50S ribosomal subunit.

This protein binds specifically to 23S rRNA; its binding is stimulated by other ribosomal proteins, e.g. L4, L17, and L20. It is important during the early stages of 50S assembly. It makes multiple contacts with different domains of the 23S rRNA in the assembled 50S subunit and ribosome. Functionally, the globular domain of the protein is located near the polypeptide exit tunnel on the outside of the subunit, while an extended beta-hairpin is found that lines the wall of the exit tunnel in the center of the 70S ribosome. The chain is Large ribosomal subunit protein uL22 from Protochlamydia amoebophila (strain UWE25).